The following is a 153-amino-acid chain: ATP synthase subunit b' (153 aa).

A helical transmembrane segment spans residues leucine 23–phenylalanine 40.

This sequence belongs to the ATPase B chain family. As to quaternary structure, F-type ATPases have 2 components, F(1) - the catalytic core - and F(0) - the membrane proton channel. F(1) has five subunits: alpha(3), beta(3), gamma(1), delta(1), epsilon(1). F(0) has four main subunits: a(1), b(1), b'(1) and c(10-14). The alpha and beta chains form an alternating ring which encloses part of the gamma chain. F(1) is attached to F(0) by a central stalk formed by the gamma and epsilon chains, while a peripheral stalk is formed by the delta, b and b' chains.

The protein localises to the cellular thylakoid membrane. F(1)F(0) ATP synthase produces ATP from ADP in the presence of a proton or sodium gradient. F-type ATPases consist of two structural domains, F(1) containing the extramembraneous catalytic core and F(0) containing the membrane proton channel, linked together by a central stalk and a peripheral stalk. During catalysis, ATP synthesis in the catalytic domain of F(1) is coupled via a rotary mechanism of the central stalk subunits to proton translocation. Its function is as follows. Component of the F(0) channel, it forms part of the peripheral stalk, linking F(1) to F(0). The b'-subunit is a diverged and duplicated form of b found in plants and photosynthetic bacteria. In Prochlorococcus marinus (strain MIT 9301), this protein is ATP synthase subunit b'.